The primary structure comprises 365 residues: NAD(P)H-quinone oxidoreductase subunit 1, chloroplastic (365 aa).

8 helical membrane-spanning segments follow: residues 27-47 (VWIF…VLVI), 98-118 (FSIG…VIPF), 129-149 (IGIF…LMSG), 165-185 (AAQS…ISLL), 203-223 (FWGW…ISSL), 253-273 (FGLF…FVTI), 302-322 (IFGT…FLFI), and 345-365 (FLLP…LFSL).

The protein belongs to the complex I subunit 1 family. As to quaternary structure, NDH is composed of at least 16 different subunits, 5 of which are encoded in the nucleus.

Its subcellular location is the plastid. The protein resides in the chloroplast thylakoid membrane. The enzyme catalyses a plastoquinone + NADH + (n+1) H(+)(in) = a plastoquinol + NAD(+) + n H(+)(out). It catalyses the reaction a plastoquinone + NADPH + (n+1) H(+)(in) = a plastoquinol + NADP(+) + n H(+)(out). Its function is as follows. NDH shuttles electrons from NAD(P)H:plastoquinone, via FMN and iron-sulfur (Fe-S) centers, to quinones in the photosynthetic chain and possibly in a chloroplast respiratory chain. The immediate electron acceptor for the enzyme in this species is believed to be plastoquinone. Couples the redox reaction to proton translocation, and thus conserves the redox energy in a proton gradient. The chain is NAD(P)H-quinone oxidoreductase subunit 1, chloroplastic from Arabis hirsuta (Hairy rock-cress).